Reading from the N-terminus, the 133-residue chain is Holo-[acyl-carrier-protein] synthase (133 aa).

Mg(2+)-binding residues include Asp8 and Glu57.

The protein belongs to the P-Pant transferase superfamily. AcpS family. Requires Mg(2+) as cofactor.

The protein resides in the cytoplasm. It carries out the reaction apo-[ACP] + CoA = holo-[ACP] + adenosine 3',5'-bisphosphate + H(+). In terms of biological role, transfers the 4'-phosphopantetheine moiety from coenzyme A to a Ser of acyl-carrier-protein. This chain is Holo-[acyl-carrier-protein] synthase, found in Bartonella quintana (strain Toulouse) (Rochalimaea quintana).